We begin with the raw amino-acid sequence, 341 residues long: tRNA uridine(34) hydroxylase (341 aa).

The 95-residue stretch at 139-233 (SDPEVVLVDT…YLEEVPSTET (95 aa)) folds into the Rhodanese domain. Cys-193 serves as the catalytic Cysteine persulfide intermediate. 2 stretches are compositionally biased toward basic and acidic residues: residues 306 to 316 (SLAEERGESHI) and 324 to 341 (IEER…QANK). Residues 306–341 (SLAEERGESHIGGDIQNIIEERRQEKNDKKAKQANK) form a disordered region.

It belongs to the TrhO family.

It carries out the reaction uridine(34) in tRNA + AH2 + O2 = 5-hydroxyuridine(34) in tRNA + A + H2O. Functionally, catalyzes oxygen-dependent 5-hydroxyuridine (ho5U) modification at position 34 in tRNAs. The protein is tRNA uridine(34) hydroxylase of Colwellia psychrerythraea (strain 34H / ATCC BAA-681) (Vibrio psychroerythus).